A 428-amino-acid chain; its full sequence is MKKPFYKVLYVQVIFAIVVGVLLGHLYPSLAVDMKPLGDGFIKLIKMVIGPIIFCTVVTGIAGMQDMKKVGRVGGKALLYFEIVSTFALVLGLAATHILRPGVGFNIDPATLNGKEVASYAAKAHGQSTVDFLMHIIPNTMIDAFAQGEILQILLIALLFGSVLAHLGERGRVVTDFIDGITRVLFGIVHIVTKLAPVGAFGAMAFTIGKYGVGSLVPLLKLIGTFYLTSVVFVLVVLGAIARFTGFSIVRFVGYIKEELLIVLGTSSSEAALPQLMEKLEKAGCSRSVVGLVVPTGYSFNLDGTNIYMTMAVLFIAQATNIELTWMQQLTLLAVAMLTSKGASGVTGAGFITLAATLAVVPTIPLSGMVLILGIDRFMSECRALTNIVGNGVATVVVSAWEKELDRAKLHAALSGNGKAAAGEAARV.

The next 8 helical transmembrane spans lie at 8–28 (VLYV…HLYP), 44–64 (LIKM…IAGM), 78–98 (LLYF…ATHI), 148–168 (GEIL…AHLG), 184–204 (VLFG…FGAM), 222–242 (LIGT…GAIA), 307–327 (IYMT…LTWM), and 355–375 (AATL…ILGI).

Belongs to the dicarboxylate/amino acid:cation symporter (DAACS) (TC 2.A.23) family.

It localises to the cell inner membrane. Functionally, responsible for the transport of dicarboxylates such as succinate, fumarate, and malate from the periplasm across the membrane. The protein is C4-dicarboxylate transport protein of Burkholderia thailandensis (strain ATCC 700388 / DSM 13276 / CCUG 48851 / CIP 106301 / E264).